Here is a 608-residue protein sequence, read N- to C-terminus: tRNA (guanine(37)-N(1))-methyltransferase 1 (608 aa).

Residues 207 to 229 (SRPKKKKRRKEEERSEGKKRTGK) form a disordered region. A compositionally biased stretch (basic and acidic residues) spans 216-229 (KEEERSEGKKRTGK). S-adenosyl-L-methionine contacts are provided by residues arginine 425, 463 to 464 (DL), 491 to 492 (DG), and asparagine 514.

Belongs to the class I-like SAM-binding methyltransferase superfamily. TRM5/TYW2 family. As to quaternary structure, monomer.

It is found in the mitochondrion matrix. Its subcellular location is the nucleus. The protein resides in the cytoplasm. The enzyme catalyses guanosine(37) in tRNA + S-adenosyl-L-methionine = N(1)-methylguanosine(37) in tRNA + S-adenosyl-L-homocysteine + H(+). Functionally, specifically methylates the N1 position of guanosine-37 in various cytoplasmic and mitochondrial tRNAs. Methylation is not dependent on the nature of the nucleoside 5' of the target nucleoside. This is the first step in the biosynthesis of wybutosine (yW), a modified base adjacent to the anticodon of tRNAs and required for accurate decoding. The chain is tRNA (guanine(37)-N(1))-methyltransferase 1 from Vitis vinifera (Grape).